A 137-amino-acid polypeptide reads, in one-letter code: MSRQHQKSSPPGGSTRSLRVGELIRHAVAEILAQGGVHDPVLESHLVTVPEVRMSPDLKLATIYVMPLGGRDEKLVIDALEHHKRFLRGEIAHRVNLKFAPELRFRIDERFAEAERIDKLLRSPAVQKDLEPNSDQD.

This sequence belongs to the RbfA family. As to quaternary structure, monomer. Binds 30S ribosomal subunits, but not 50S ribosomal subunits or 70S ribosomes.

The protein resides in the cytoplasm. One of several proteins that assist in the late maturation steps of the functional core of the 30S ribosomal subunit. Associates with free 30S ribosomal subunits (but not with 30S subunits that are part of 70S ribosomes or polysomes). Required for efficient processing of 16S rRNA. May interact with the 5'-terminal helix region of 16S rRNA. The protein is Ribosome-binding factor A of Rhodopseudomonas palustris (strain TIE-1).